Consider the following 121-residue polypeptide: Small ribosomal subunit protein uS13 (121 aa).

Residues 96-121 (PVRGQNTKNNARTRKGKAVAIAGKKK) form a disordered region. The segment covering 106–121 (ARTRKGKAVAIAGKKK) has biased composition (basic residues).

Belongs to the universal ribosomal protein uS13 family. In terms of assembly, part of the 30S ribosomal subunit. Forms a loose heterodimer with protein S19. Forms two bridges to the 50S subunit in the 70S ribosome.

Functionally, located at the top of the head of the 30S subunit, it contacts several helices of the 16S rRNA. In the 70S ribosome it contacts the 23S rRNA (bridge B1a) and protein L5 of the 50S subunit (bridge B1b), connecting the 2 subunits; these bridges are implicated in subunit movement. Contacts the tRNAs in the A and P-sites. This chain is Small ribosomal subunit protein uS13, found in Streptococcus pyogenes serotype M3 (strain SSI-1).